The following is a 135-amino-acid chain: Large ribosomal subunit protein uL16c (135 aa).

A compositionally biased stretch (basic residues) spans 1–23 (MLSPKKTKFRKEHRGRMKGRSSR). The disordered stretch occupies residues 1-24 (MLSPKKTKFRKEHRGRMKGRSSRG).

The protein belongs to the universal ribosomal protein uL16 family. Part of the 50S ribosomal subunit.

The protein localises to the plastid. It localises to the chloroplast. In Pelargonium hortorum (Common geranium), this protein is Large ribosomal subunit protein uL16c.